The chain runs to 96 residues: Large ribosomal subunit protein uL23 (96 aa).

The protein belongs to the universal ribosomal protein uL23 family. In terms of assembly, part of the 50S ribosomal subunit. Contacts protein L29, and trigger factor when it is bound to the ribosome.

Functionally, one of the early assembly proteins it binds 23S rRNA. One of the proteins that surrounds the polypeptide exit tunnel on the outside of the ribosome. Forms the main docking site for trigger factor binding to the ribosome. In Brevibacillus brevis (strain 47 / JCM 6285 / NBRC 100599), this protein is Large ribosomal subunit protein uL23.